The chain runs to 653 residues: Sodium-dependent phosphate transporter 2 (653 aa).

A topological domain (extracellular) is located at residue methionine 1. Residues 2–22 (VLVEYLWMVIVGFIIAFILAF) form a helical membrane-spanning segment. The Cytoplasmic portion of the chain corresponds to 23-46 (SVGANDVANSFGTAVGSGVVTLRQ). Residues 47-67 (ACILASIFETTGSVLLGAKVG) traverse the membrane as a helical segment. The Extracellular portion of the chain corresponds to 68-86 (ETIRKGIIDVNLYNNTVDL). Asparagine 81 carries N-linked (GlcNAc...) asparagine glycosylation. The chain crosses the membrane as a helical span at residues 87-107 (LMAGEVSAMVGSAVWQLIASF). The Cytoplasmic portion of the chain corresponds to 108-109 (LR). Residues 110–130 (LPISGTHCIVGATIGFSLVAI) form a helical membrane-spanning segment. The Extracellular segment spans residues 131 to 142 (GTHGVQWMQLVK). The helical transmembrane segment at 143–163 (IVASWFISPLLSGLMSGALFL) threads the bilayer. Topologically, residues 164-187 (MIKFFILKKEDPVPNGLKALPVFY) are cytoplasmic. A helical membrane pass occupies residues 188–208 (AATIGINVFSILYTGAPLLGL). The Extracellular portion of the chain corresponds to 209–217 (ESFPVWATA). Residues 218 to 238 (LLSIGIAIIFALIVWFFVCPW) form a helical membrane-spanning segment. The Cytoplasmic portion of the chain corresponds to 239–483 (MKKKIASRLK…EDKEEKDKSE (245 aa)). The chain crosses the membrane as a helical span at residues 484–504 (VHLLFHFLQILTACFGSFAHG). Residues 505–532 (GNDVSNAIGPLVALWLIYEQGGVMQEAS) are Extracellular-facing. A helical membrane pass occupies residues 533-553 (TPVWLLLYGGVGICAGLWVWG). Residues 554 to 572 (RRVIQTMGKDLTPITPSSG) lie on the Cytoplasmic side of the membrane. A helical transmembrane segment spans residues 573-587 (FTIELASAFTVVVAS). The Extracellular segment spans residues 588-594 (NIGLPIS). The helical transmembrane segment at 595–610 (TTHCKVGSVVAVGWIR) threads the bilayer. Topologically, residues 611–622 (SRKAVDWRLFRN) are cytoplasmic. Residues 623–643 (IFLAWFVTVPVAGLFSAGVMA) traverse the membrane as a helical segment. The Extracellular portion of the chain corresponds to 644 to 653 (ILQYGILPYV).

The protein belongs to the inorganic phosphate transporter (PiT) (TC 2.A.20) family. Homodimer.

It localises to the cell membrane. Its subcellular location is the apical cell membrane. The catalysed reaction is 2 Na(+)(out) + phosphate(out) = 2 Na(+)(in) + phosphate(in). In terms of biological role, sodium-phosphate symporter which preferentially transports the monovalent form of phosphate with a stoichiometry of two sodium ions per phosphate ion. The protein is Sodium-dependent phosphate transporter 2 (slc20a2) of Xenopus tropicalis (Western clawed frog).